Here is a 563-residue protein sequence, read N- to C-terminus: Secreted lipase ARB07186/07185 (563 aa).

A signal peptide spans M1–A20. An intrachain disulfide couples C83 to C101. The active-site Acyl-ester intermediate is the S215. An intrachain disulfide couples C268 to C281.

The protein belongs to the type-B carboxylesterase/lipase family.

It localises to the secreted. The enzyme catalyses a triacylglycerol + H2O = a diacylglycerol + a fatty acid + H(+). This Arthroderma benhamiae (strain ATCC MYA-4681 / CBS 112371) (Trichophyton mentagrophytes) protein is Secreted lipase ARB07186/07185.